A 167-amino-acid polypeptide reads, in one-letter code: I-Kappa-B like protein I1 (167 aa).

ANK repeat units lie at residues 54–86 (HGKQ…DING), 91–121 (FGNT…NMGI), and 125–154 (LFKT…QCRI).

It belongs to the polydnaviridae I-Kappa-B-like protein family.

In terms of biological role, suppresses the host immune response through NF-kappa-B inactivation. Possesses ankyrin repeat domains required for NF-kappa-B binding but lacks the regulatory regions required for dissociation from NF-kappa-B and degradation. Therefore, prevents host NF-kappa-B release and subsequent activation. The polypeptide is I-Kappa-B like protein I1 (I1) (Microplitis demolitor (Parasitoid wasp)).